A 56-amino-acid polypeptide reads, in one-letter code: Endoglucanase Cel5A (56 aa).

Residue Glu-45 is the Nucleophile of the active site.

It belongs to the glycosyl hydrolase 5 (cellulase A) family.

The protein localises to the secreted. It is found in the extracellular space. The catalysed reaction is Endohydrolysis of (1-&gt;4)-beta-D-glucosidic linkages in cellulose, lichenin and cereal beta-D-glucans.. In terms of biological role, has avicelase and carboxymethylcellulase activity. This is Endoglucanase Cel5A from Gloeophyllum trabeum (Brown rot fungus).